We begin with the raw amino-acid sequence, 410 residues long: Chitinase-3-like protein 1 (410 aa).

Positions 1 to 48 (MGVKAAQTGIWASQGQSIRVVGFQAQTAHRAICLLGFVVLVLLQCCSA) are cleaved as a signal peptide. The region spanning 49 to 410 (YKLVCYYTSW…NAIKDALAAT (362 aa)) is the GH18 domain. An intrachain disulfide couples Cys53 to Cys78. An N-linked (GlcNAc...) asparagine glycan is attached at Asn87. Chitin-binding positions include 97–98 (EW), 124–127 (GGWN), Tyr168, 231–234 (MTYD), and Arg290. A disulfide bridge links Cys327 with Cys391. The important for AKT1 activation and IL8 production stretch occupies residues 351–365 (QWVGYDDQESVKSKV). Trp379 is a binding site for chitin.

It belongs to the glycosyl hydrolase 18 family. As to quaternary structure, monomer.

The protein resides in the secreted. It is found in the extracellular space. The protein localises to the cytoplasm. Its subcellular location is the perinuclear region. It localises to the endoplasmic reticulum. Functionally, carbohydrate-binding lectin with a preference for chitin. Has no chitinase activity. May play a role in tissue remodeling and in the capacity of cells to respond to and cope with changes in their environment. Plays a role in T-helper cell type 2 (Th2) inflammatory response and IL-13-induced inflammation, regulating allergen sensitization, inflammatory cell apoptosis, dendritic cell accumulation and M2 macrophage differentiation. Facilitates invasion of pathogenic enteric bacteria into colonic mucosa and lymphoid organs. Mediates activation of AKT1 signaling pathway and subsequent IL8 production in colonic epithelial cells. Regulates antibacterial responses in lung by contributing to macrophage bacterial killing, controlling bacterial dissemination and augmenting host tolerance. Also regulates hyperoxia-induced injury, inflammation and epithelial apoptosis in lung. The polypeptide is Chitinase-3-like protein 1 (CHI3L1) (Pongo abelii (Sumatran orangutan)).